The sequence spans 250 residues: MPASSPFLLAPKGPPGNMGGPVREPALSVALWLSWGAALGAVACAMALLTQQTELQSLRREVSRLQGTGGPSQNGEGYPWQSLPEQSSDALEAWENGERSRKRRAVLTQKQKKQHSVLHLVPINATSKDDSDVTEVMWQPALRRGRGLQAQGYGVRIQDAGVYLLYSQVLFQDVTFTMGQVVSREGQGRQETLFRCIRSMPSHPDRAYNSCYSAGVFHLHQGDILSVIIPRARAKLNLSPHGTFLGFVKL.

A propeptide spanning residues 1 to 104 (MPASSPFLLA…ENGERSRKRR (104 aa)) is cleaved from the precursor. 2 disordered regions span residues 61 to 82 (EVSR…PWQS) and 89 to 108 (DALE…AVLT). The 135-residue stretch at 116–250 (SVLHLVPINA…HGTFLGFVKL (135 aa)) folds into the THD domain. N-linked (GlcNAc...) asparagine glycosylation occurs at Asn124. A disulfide bridge links Cys196 with Cys211.

The protein belongs to the tumor necrosis factor family. Homotrimer. Post-translationally, the precursor is cleaved by furin. In terms of tissue distribution, expressed at high levels in transformed cell lines, cancers of colon, thyroid, lymphoid tissues and specifically expressed in monocytes and macrophages.

The protein localises to the secreted. Its function is as follows. Cytokine that binds to TNFRSF13B/TACI and to TNFRSF17/BCMA. Plays a role in the regulation of tumor cell growth. May be involved in monocyte/macrophage-mediated immunological processes. The chain is Tumor necrosis factor ligand superfamily member 13 (TNFSF13) from Homo sapiens (Human).